The chain runs to 1187 residues: Probable histidine kinase 5 (1187 aa).

Over Met-1–Gly-175 the chain is Extracellular. Residues Met-176–Phe-196 form a helical membrane-spanning segment. The Cytoplasmic segment spans residues Lys-197–Arg-226. The helical transmembrane segment at Ala-227–His-247 threads the bilayer. Topologically, residues Ala-248–Ser-531 are extracellular. One can recognise a CHASE domain in the interval Asn-295 to His-519. The chain crosses the membrane as a helical span at residues Ala-532–Ala-552. Residues Thr-553–Thr-1187 are Cytoplasmic-facing. The Histidine kinase domain maps to Thr-587–Glu-862. His-590 carries the post-translational modification Phosphohistidine; by autocatalysis. Response regulatory domains lie at Arg-886 to Leu-1017 and Asn-1041 to Leu-1178. 4-aspartylphosphate is present on residues Asp-942 and Asp-1091.

Post-translationally, activation probably requires a transfer of a phosphate group between a His in the transmitter domain and an Asp of the receiver domain. In terms of tissue distribution, highly expressed in young leaves and at lower levels in roots, mature leaves, stems and spikelets.

Its subcellular location is the cell membrane. It carries out the reaction ATP + protein L-histidine = ADP + protein N-phospho-L-histidine.. In terms of biological role, cytokinin receptor related to bacterial two-component regulators. Functions as a histidine kinase and transmits the stress signal to a downstream MAPK cascade. The polypeptide is Probable histidine kinase 5 (Oryza sativa subsp. japonica (Rice)).